The primary structure comprises 328 residues: C-type lectin domain family 4 member K (328 aa).

Residues 1 to 43 (MTVEKEAPDAHFTVDKQNISLWPREPPPKSGPSLVPGKTPTVR) lie on the Cytoplasmic side of the membrane. Residues 44–64 (AALICLTLVLVASVLLQAVLY) form a helical; Signal-anchor for type II membrane protein membrane-spanning segment. Over 65–328 (PRFMGTISDV…CKRPYVPSEP (264 aa)) the chain is Extracellular. Residues asparagine 87, asparagine 113, and asparagine 180 are each glycosylated (N-linked (GlcNAc...) asparagine). A coiled-coil region spans residues 145-190 (EEVSTLNAQIPELKSDLEKASALNTKIRALQGSLENMSKLLKRQND). The region spanning 202-320 (FKGNFYYFSL…CDKTFLFICK (119 aa)) is the C-type lectin domain. 2 disulfides stabilise this stretch: cysteine 223/cysteine 319 and cysteine 295/cysteine 311.

As to quaternary structure, homotrimer. Exclusively expressed by Langerhans cells. Expressed in astrocytoma and malignant ependymoma, but not in normal brain tissues.

The protein resides in the membrane. Calcium-dependent lectin displaying mannose-binding specificity. Induces the formation of Birbeck granules (BGs); is a potent regulator of membrane superimposition and zippering. Binds to sulfated as well as mannosylated glycans, keratan sulfate (KS) and beta-glucans. Facilitates uptake of antigens and is involved in the routing and/or processing of antigen for presentation to T cells. Major receptor on primary Langerhans cells for Candida species, Saccharomyces species, and Malassezia furfur. Protects against human immunodeficiency virus-1 (HIV-1) infection. Binds to high-mannose structures present on the envelope glycoprotein which is followed by subsequent targeting of the virus to the Birbeck granules leading to its rapid degradation. The sequence is that of C-type lectin domain family 4 member K (CD207) from Homo sapiens (Human).